The sequence spans 480 residues: Probable cytosol aminopeptidase (480 aa).

Mn(2+) is bound by residues Lys248 and Asp253. Lys260 is a catalytic residue. Mn(2+) contacts are provided by Asp271, Asp330, and Glu332. Arg334 is an active-site residue.

Belongs to the peptidase M17 family. Mn(2+) serves as cofactor.

It localises to the cytoplasm. The catalysed reaction is Release of an N-terminal amino acid, Xaa-|-Yaa-, in which Xaa is preferably Leu, but may be other amino acids including Pro although not Arg or Lys, and Yaa may be Pro. Amino acid amides and methyl esters are also readily hydrolyzed, but rates on arylamides are exceedingly low.. It catalyses the reaction Release of an N-terminal amino acid, preferentially leucine, but not glutamic or aspartic acids.. Presumably involved in the processing and regular turnover of intracellular proteins. Catalyzes the removal of unsubstituted N-terminal amino acids from various peptides. The polypeptide is Probable cytosol aminopeptidase (Solibacter usitatus (strain Ellin6076)).